A 176-amino-acid chain; its full sequence is Natural cytotoxicity triggering receptor 3 (176 aa).

An N-terminal signal peptide occupies residues 1-18 (MAWMLLLILIMVYPGSCA). Positions 19–126 (LWVSQPPEIR…VGTGNGTRLV (108 aa)) constitute an Ig-like domain. Residues 19-135 (LWVSQPPEIR…VVEKEYPQLG (117 aa)) are Extracellular-facing. A disulfide bridge connects residues Cys39 and Cys108. 2 N-linked (GlcNAc...) asparagine glycosylation sites follow: Asn42 and Asn121. Residues 136-156 (AGTVLLLRAGFYAVSFLSVAV) form a helical membrane-spanning segment. Over 157–176 (GSTLYYQGKCHCHMGTHCHS) the chain is Cytoplasmic.

This sequence belongs to the natural cytotoxicity receptor (NCR) family. Homodimer in the unliganted form. Interacts with CD3Z. Interacts with and is activated by binding to NCR3LG1. Interacts with and is activated by binding to BAG6. Interacts with and is inhibited by binding to LGALS3.

Its subcellular location is the cell membrane. In terms of biological role, cell membrane receptor of natural killer/NK cells that is activated by binding of extracellular ligands including BAG6 and NCR3LG1. Stimulates NK cells cytotoxicity toward neighboring cells producing these ligands. It controls, for instance, NK cells cytotoxicity against tumor cells. Engagement of NCR3 by BAG6 also promotes myeloid dendritic cells (DC) maturation, both through killing DCs that did not acquire a mature phenotype, and inducing the release by NK cells of TNFA and IFNG that promote DC maturation. The polypeptide is Natural cytotoxicity triggering receptor 3 (NCR3) (Macaca fascicularis (Crab-eating macaque)).